A 260-amino-acid chain; its full sequence is Archaerhodopsin-1 (260 aa).

Positions 1–6 (MDPIAL) are excised as a propeptide. Topologically, residues 7–20 (TAAVGADLLGDGRP) are extracellular. Residues 21-42 (ETLWLGIGTLLMLIGTFYFIVK) form a helical membrane-spanning segment. Over 43–51 (GWGVTDKEA) the chain is Cytoplasmic. A helical membrane pass occupies residues 52-73 (REYYSITILVPGIASAAYLSMF). The Extracellular segment spans residues 74–91 (FGIGLTEVQVGSEMLDIY). The chain crosses the membrane as a helical span at residues 92 to 113 (YARYADWLFTTPLLLLDLALLA). The Cytoplasmic portion of the chain corresponds to 114 to 116 (KVD). Residues 117–139 (RVSIGTLVGVDALMIVTGLVGAL) form a helical membrane-spanning segment. The Extracellular segment spans residues 140–143 (SHTP). A helical membrane pass occupies residues 144–172 (LARYTWWLFSTICMIVVLYFLATSLRAAA). Topologically, residues 173–176 (KERG) are cytoplasmic. The helical transmembrane segment at 177 to 204 (PEVASTFNTLTALVLVLWTAYPILWIIG) threads the bilayer. The Extracellular portion of the chain corresponds to 205-212 (TEGAGVVG). A helical transmembrane segment spans residues 213–245 (LGIETLLFMVLDVTAKVGFGFILLRSRAILGDT). N6-(retinylidene)lysine is present on Lys-228. The Cytoplasmic segment spans residues 246 to 260 (EAPEPSAGAEASAAD).

The protein belongs to the archaeal/bacterial/fungal opsin family.

The protein localises to the cell membrane. Its function is as follows. Light-driven proton pump. It may interact with bacterioruberin in the claret membrane. This is Archaerhodopsin-1 from Halorubrum ezzemoulense (Halorubrum chaoviator).